Consider the following 156-residue polypeptide: Cyanate hydratase (156 aa).

Catalysis depends on residues Arg-96, Glu-99, and Ser-122.

It belongs to the cyanase family.

It catalyses the reaction cyanate + hydrogencarbonate + 3 H(+) = NH4(+) + 2 CO2. Functionally, catalyzes the reaction of cyanate with bicarbonate to produce ammonia and carbon dioxide. The sequence is that of Cyanate hydratase from Burkholderia mallei (strain NCTC 10247).